A 213-amino-acid chain; its full sequence is ATP-dependent Clp protease proteolytic subunit (213 aa).

Ser-114 (nucleophile) is an active-site residue. Residue His-139 is part of the active site.

This sequence belongs to the peptidase S14 family. Fourteen ClpP subunits assemble into 2 heptameric rings which stack back to back to give a disk-like structure with a central cavity, resembling the structure of eukaryotic proteasomes.

The protein localises to the cytoplasm. It catalyses the reaction Hydrolysis of proteins to small peptides in the presence of ATP and magnesium. alpha-casein is the usual test substrate. In the absence of ATP, only oligopeptides shorter than five residues are hydrolyzed (such as succinyl-Leu-Tyr-|-NHMec, and Leu-Tyr-Leu-|-Tyr-Trp, in which cleavage of the -Tyr-|-Leu- and -Tyr-|-Trp bonds also occurs).. Cleaves peptides in various proteins in a process that requires ATP hydrolysis. Has a chymotrypsin-like activity. Plays a major role in the degradation of misfolded proteins. The chain is ATP-dependent Clp protease proteolytic subunit from Ectopseudomonas mendocina (strain ymp) (Pseudomonas mendocina).